A 63-amino-acid chain; its full sequence is Prokaryotic ubiquitin-like protein Pup (63 aa).

The segment at 1–28 is disordered; it reads MSDRQTQIPAGGGREDDHDDQVQSAGQV. The ARC ATPase binding stretch occupies residues 19-57; sequence DDQVQSAGQVQVNTEGVDDLLDEIDGLLENNAEEFVRSY. E63 participates in a covalent cross-link: Isoglutamyl lysine isopeptide (Glu-Lys) (interchain with K-? in acceptor proteins).

This sequence belongs to the prokaryotic ubiquitin-like protein family. In terms of assembly, strongly interacts with the proteasome-associated ATPase ARC through a hydrophobic interface; the interacting region of Pup lies in its C-terminal half. There is one Pup binding site per ARC hexamer ring.

It participates in protein degradation; proteasomal Pup-dependent pathway. Its function is as follows. Protein modifier that is covalently attached to lysine residues of substrate proteins, thereby targeting them for proteasomal degradation. The tagging system is termed pupylation. This is Prokaryotic ubiquitin-like protein Pup from Corynebacterium efficiens (strain DSM 44549 / YS-314 / AJ 12310 / JCM 11189 / NBRC 100395).